The primary structure comprises 208 residues: Uracil phosphoribosyltransferase (208 aa).

5-phospho-alpha-D-ribose 1-diphosphate contacts are provided by residues R78, R103, and 130–138 (DPMLATGGS). Uracil is bound by residues I193 and 198–200 (GDA). D199 contributes to the 5-phospho-alpha-D-ribose 1-diphosphate binding site.

It belongs to the UPRTase family. Mg(2+) serves as cofactor.

The catalysed reaction is UMP + diphosphate = 5-phospho-alpha-D-ribose 1-diphosphate + uracil. It participates in pyrimidine metabolism; UMP biosynthesis via salvage pathway; UMP from uracil: step 1/1. Its activity is regulated as follows. Allosterically activated by GTP. Its function is as follows. Catalyzes the conversion of uracil and 5-phospho-alpha-D-ribose 1-diphosphate (PRPP) to UMP and diphosphate. This is Uracil phosphoribosyltransferase from Escherichia fergusonii (strain ATCC 35469 / DSM 13698 / CCUG 18766 / IAM 14443 / JCM 21226 / LMG 7866 / NBRC 102419 / NCTC 12128 / CDC 0568-73).